We begin with the raw amino-acid sequence, 85 residues long: Conotoxin Mi15a (85 aa).

An N-terminal signal peptide occupies residues 1 to 23 (MEKLTVLILVATVLLTIQVLGQS). Positions 24–49 (DRDKHLKRRPKQYATKRLSARMRGHR) are excised as a propeptide. Position 50 is a pyrrolidone carboxylic acid (Q50).

The protein belongs to the conotoxin O2 superfamily. Contains 4 disulfide bonds. In terms of tissue distribution, expressed by the venom duct.

It is found in the secreted. In Conus miles (Soldier cone), this protein is Conotoxin Mi15a.